The sequence spans 193 residues: MIGRIAGTLLEKNPPHLLVDCHGVGYEIDVPMSTFYNLPAIGHPVTLLTQQIVREDAHLLFGFATATERNTFRELIKITGVGARMALAVLSGLSVPELAQAVTMQEAGRLTKIPGIGKKTAERLLLELKGKLGADLGHAPGATPLADSAVDILNALLALGYSEKEAAQAIKQVPAGTGVSDGIKLALKALSKG.

The interval 1–64 is domain I; the sequence is MIGRIAGTLL…EDAHLLFGFA (64 aa). The interval 65–144 is domain II; the sequence is TATERNTFRE…DLGHAPGATP (80 aa). The segment at 145–151 is flexible linker; the sequence is LADSAVD. The domain III stretch occupies residues 151–193; the sequence is DILNALLALGYSEKEAAQAIKQVPAGTGVSDGIKLALKALSKG.

The protein belongs to the RuvA family. In terms of assembly, homotetramer. Forms an RuvA(8)-RuvB(12)-Holliday junction (HJ) complex. HJ DNA is sandwiched between 2 RuvA tetramers; dsDNA enters through RuvA and exits via RuvB. An RuvB hexamer assembles on each DNA strand where it exits the tetramer. Each RuvB hexamer is contacted by two RuvA subunits (via domain III) on 2 adjacent RuvB subunits; this complex drives branch migration. In the full resolvosome a probable DNA-RuvA(4)-RuvB(12)-RuvC(2) complex forms which resolves the HJ.

Its subcellular location is the cytoplasm. Its function is as follows. The RuvA-RuvB-RuvC complex processes Holliday junction (HJ) DNA during genetic recombination and DNA repair, while the RuvA-RuvB complex plays an important role in the rescue of blocked DNA replication forks via replication fork reversal (RFR). RuvA specifically binds to HJ cruciform DNA, conferring on it an open structure. The RuvB hexamer acts as an ATP-dependent pump, pulling dsDNA into and through the RuvAB complex. HJ branch migration allows RuvC to scan DNA until it finds its consensus sequence, where it cleaves and resolves the cruciform DNA. This chain is Holliday junction branch migration complex subunit RuvA, found in Cupriavidus metallidurans (strain ATCC 43123 / DSM 2839 / NBRC 102507 / CH34) (Ralstonia metallidurans).